Reading from the N-terminus, the 154-residue chain is MAVSIRLARGGAKKRPYYRIVVADARSPRDGAFIEKIGAYNPLLAKDDPKRVVLDTDRAKHWLSVGAQPTDRVARFLDAAGVQERAARSNPKKAEPGEKAKERAEERAAKLAAAEEAANAPAEEPAAEPAAEEVTEVAAEAPAEEAAAEESTEA.

Residues 82-154 (VQERAARSNP…EAAAEESTEA (73 aa)) are disordered. The span at 92 to 109 (KKAEPGEKAKERAEERAA) shows a compositional bias: basic and acidic residues. Over residues 110–129 (KLAAAEEAANAPAEEPAAEP) the composition is skewed to low complexity. Residues 142–154 (PAEEAAAEESTEA) show a composition bias toward acidic residues.

The protein belongs to the bacterial ribosomal protein bS16 family.

This is Small ribosomal subunit protein bS16 from Rhizorhabdus wittichii (strain DSM 6014 / CCUG 31198 / JCM 15750 / NBRC 105917 / EY 4224 / RW1) (Sphingomonas wittichii).